We begin with the raw amino-acid sequence, 329 residues long: MSRRVEYTLAPPQRNESDGFDYPDGIPISYNLHRLRHFECEGSYPKYPYGSLVKFYAMVGLHRYNVLEGKNLQLDTLKSFNMRINCGASSYYITLAARVPDSGLKQIFQVLVHEERLGSLDMTCTIARPRVTTNVPFLRPHSESEYDYMDNDELPDWPSEIAFDDTKRFHLVKESELRDNDWIRLYLELTLVAHDRFLTVHYLSQLEIVKVAIEEVEQPNASLNTKTTFVYITYKDLAKAQIGEPVDRKAIVRKIINETTGLLRLRGDYWSGERSVITPEEEYMLLHGGEKVRNNEQRSKKLKRRVGVHRLWRWWYQAYKNRGLRSSSY.

This sequence belongs to the UPF0725 (EMB2204) family.

In terms of biological role, may be involved in embryogenesis. This chain is UPF0725 protein EMB2204 (EMB2204), found in Arabidopsis thaliana (Mouse-ear cress).